A 130-amino-acid chain; its full sequence is Biotin carboxyl carrier protein (130 aa).

The tract at residues 20–64 (EISESSVPAATPITPTTENTRAASDQKQQSQTPSPAATASAANTM) is disordered. A compositionally biased stretch (polar residues) spans 23–46 (ESSVPAATPITPTTENTRAASDQK). Positions 47 to 64 (QQSQTPSPAATASAANTM) are enriched in low complexity. Residues 55–130 (AATASAANTM…NAGDNLITIA (76 aa)) enclose the Biotinyl-binding domain. Lys96 carries the post-translational modification N6-biotinyllysine.

This chain is Biotin carboxyl carrier protein (bcc), found in Streptococcus mutans serotype c (strain ATCC 700610 / UA159).